We begin with the raw amino-acid sequence, 290 residues long: Transcription cofactor vestigial-like protein 4 (290 aa).

Met-1 is subject to N-acetylmethionine. A compositionally biased stretch (basic and acidic residues) spans 17–30 (ADDEKREAALRGEP). 4 disordered regions span residues 17-65 (ADDE…PGDE), 85-106 (LNKTANGDCRRDPRERSRSPIE), 140-161 (LDASRPAGLSPTLTPGERQQNR), and 254-290 (AAKDGASSSPESASRRGQPASPSAHMVSHSHSPSVVS). Ser-52 is modified (phosphoserine). Positions 92 to 105 (DCRRDPRERSRSPI) are enriched in basic and acidic residues. Phosphoserine is present on Ser-149. Residues 150–161 (PTLTPGERQQNR) show a composition bias toward polar residues. Phosphothreonine is present on Thr-153. Residues 272–290 (PASPSAHMVSHSHSPSVVS) show a composition bias toward low complexity. Position 274 is a phosphoserine (Ser-274).

Belongs to the vestigial family. Interacts with TEFs. Interacts with IRF2BP2.

The protein resides in the nucleus. Its function is as follows. May act as a specific coactivator for the mammalian TEFs. The protein is Transcription cofactor vestigial-like protein 4 of Homo sapiens (Human).